Here is a 118-residue protein sequence, read N- to C-terminus: NADH dehydrogenase [ubiquinone] iron-sulfur protein 5-A (118 aa).

A CHCH domain is found at 46-87 (KGRCYDFWMDFSECMSHCREPKDCTLLREDYLECLHHSKEFQ). 2 short sequence motifs (cx9C motif) span residues 49 to 59 (CYDFWMDFSEC) and 69 to 79 (CTLLREDYLEC). 2 cysteine pairs are disulfide-bonded: C49–C79 and C59–C69. A disordered region spans residues 98 to 118 (RKLRAASRKGEEAGDGTHNHH).

Belongs to the complex I NDUFS5 subunit family. As to quaternary structure, complex I is composed of at least 49 different subunits. This is a component of the iron-sulfur (IP) fragment of the enzyme.

The protein resides in the mitochondrion. Its subcellular location is the mitochondrion inner membrane. The protein localises to the mitochondrion intermembrane space. In terms of biological role, accessory subunit of the mitochondrial membrane respiratory chain NADH dehydrogenase (Complex I), that is believed not to be involved in catalysis. Complex I functions in the transfer of electrons from NADH to the respiratory chain. The immediate electron acceptor for the enzyme is believed to be ubiquinone. This is NADH dehydrogenase [ubiquinone] iron-sulfur protein 5-A from Arabidopsis thaliana (Mouse-ear cress).